A 106-amino-acid polypeptide reads, in one-letter code: Transcription factor TRY (106 aa).

Positions 34-71 (TEQEEDLIFRMYRLVGDRWDLIAGRVPGRQPEEIERYW) constitute a Myb-like domain. Residues 83–106 (RRQLHSSSHKHTKPHRPRFSIYPS) form a disordered region. A compositionally biased stretch (basic residues) spans 84–100 (RQLHSSSHKHTKPHRPR).

Interacts with GL3 and thus prevents GL1 GL3 interaction. Also interacts with BHLH2. As to expression, expressed in roots, leaves, siliques and inflorescences.

It is found in the nucleus. Functionally, transcription factor. Involved in epidermal cell fate specification. Negative regulator of trichome development, including endoreplication, by lateral inhibition involving intercellular interactions. Promotes the formation of hair developing cells (trichoblasts) in H position in root epidermis, probably by inhibiting non-hair cell (atrichoblasts) formation. The sequence is that of Transcription factor TRY (TRY) from Arabidopsis thaliana (Mouse-ear cress).